A 955-amino-acid polypeptide reads, in one-letter code: Eukaryotic translation initiation factor 3 subunit C (955 aa).

Disordered stretches follow at residues 1–22 (MSRF…SEPV) and 157–299 (RAAP…EEGW). The segment covering 162–183 (DFAEEEEDDEREDEKGSDEEEE) has biased composition (acidic residues). Over residues 206-218 (VKPVADSDSSDWG) the composition is skewed to low complexity. Residues 219–229 (SDSDSDSTSSD) show a composition bias toward acidic residues. Over residues 230–250 (EDAKYTSIRDRFLKKPEKGTE) the composition is skewed to basic and acidic residues. Positions 288–297 (MFDENEEEEE) are enriched in acidic residues. The PCI domain occupies 658–834 (FHMHINLELL…ETIVMHRSEP (177 aa)). The disordered stretch occupies residues 865–955 (NFFQRGGNQG…RNVEYQNKAE (91 aa)). Residues 882 to 894 (YRNQNQNQNWNNN) show a composition bias toward low complexity. Positions 911–955 (GEGREQREHHRDHHRDQREHREHQNREFREQREQMRNVEYQNKAE) are enriched in basic and acidic residues.

This sequence belongs to the eIF-3 subunit C family. Component of the eukaryotic translation initiation factor 3 (eIF-3) complex.

The protein localises to the cytoplasm. In terms of biological role, component of the eukaryotic translation initiation factor 3 (eIF-3) complex, which is involved in protein synthesis of a specialized repertoire of mRNAs and, together with other initiation factors, stimulates binding of mRNA and methionyl-tRNAi to the 40S ribosome. The eIF-3 complex specifically targets and initiates translation of a subset of mRNAs involved in cell proliferation. The polypeptide is Eukaryotic translation initiation factor 3 subunit C (Anopheles gambiae (African malaria mosquito)).